A 231-amino-acid chain; its full sequence is NADH-ubiquinone oxidoreductase chain 4 (231 aa).

7 helical membrane-spanning segments follow: residues 1–21 (PIAG…YGII), 34–54 (MFLP…LTCL), 63–85 (IAYS…TPWG), 89–111 (AMAL…NTTY), 128–148 (ILPM…ATPP), 169–189 (TIIL…HMFL), and 211–231 (LLMA…ELII).

This sequence belongs to the complex I subunit 4 family.

The protein resides in the mitochondrion membrane. It catalyses the reaction a ubiquinone + NADH + 5 H(+)(in) = a ubiquinol + NAD(+) + 4 H(+)(out). Functionally, core subunit of the mitochondrial membrane respiratory chain NADH dehydrogenase (Complex I) that is believed to belong to the minimal assembly required for catalysis. Complex I functions in the transfer of electrons from NADH to the respiratory chain. The immediate electron acceptor for the enzyme is believed to be ubiquinone. The sequence is that of NADH-ubiquinone oxidoreductase chain 4 (MT-ND4) from Cerrophidion godmani (Porthidium godmani).